The primary structure comprises 142 residues: Dromaiocalcin-2 (142 aa).

Disulfide bonds link cysteine 6/cysteine 17, cysteine 34/cysteine 138, and cysteine 113/cysteine 130. Residues 13–139 form the C-type lectin domain; that stretch reads FDGRCYGFFP…CSDRKPFICA (127 aa). Phosphoserine occurs at positions 62 and 68.

A minor form with some unmodified Ser-68 and partial phosphorylation of Ser-66 may also occur.

It is found in the secreted. Its subcellular location is the extracellular space. The protein resides in the extracellular matrix. The chain is Dromaiocalcin-2 from Dromaius novaehollandiae (Emu).